Reading from the N-terminus, the 64-residue chain is Large ribosomal subunit protein bL35 (64 aa).

This sequence belongs to the bacterial ribosomal protein bL35 family.

The chain is Large ribosomal subunit protein bL35 from Vibrio campbellii (strain ATCC BAA-1116).